The following is a 204-amino-acid chain: Guanylate kinase (204 aa).

Positions 5-184 (GLLIVLSGPS…AVQRIKDIIA (180 aa)) constitute a Guanylate kinase-like domain. Residue 12-19 (GPSGVGKG) participates in ATP binding.

The protein belongs to the guanylate kinase family.

The protein resides in the cytoplasm. It carries out the reaction GMP + ATP = GDP + ADP. Functionally, essential for recycling GMP and indirectly, cGMP. In Enterococcus faecalis (strain ATCC 700802 / V583), this protein is Guanylate kinase.